Reading from the N-terminus, the 280-residue chain is Urease accessory protein UreD (280 aa).

The protein belongs to the UreD family. As to quaternary structure, ureD, UreF and UreG form a complex that acts as a GTP-hydrolysis-dependent molecular chaperone, activating the urease apoprotein by helping to assemble the nickel containing metallocenter of UreC. The UreE protein probably delivers the nickel.

The protein resides in the cytoplasm. Functionally, required for maturation of urease via the functional incorporation of the urease nickel metallocenter. The protein is Urease accessory protein UreD of Mesorhizobium japonicum (strain LMG 29417 / CECT 9101 / MAFF 303099) (Mesorhizobium loti (strain MAFF 303099)).